Consider the following 818-residue polypeptide: MTDTRRRVKVYTLNEDRQWDDRGTGHVSSAYVERLKGMSLLVRAESDGSLLLESKINPNTAYQKQQDTLIVWSEAENYDLALSFQEKAGCDEIWEKICQVQGKDPSVDITQELIDESEEERFDDMSSPGLELPPCELSRLEEVAELVASSLPSPLRREKLALALENEGYIRKLLELFRVCEDLENREGLHHLYDIIKGIFLLNRTALFEVMFSEECIMDVIGCLEFDPSLPQPRRHREFLTTTARFKEVIPISDPELRQKIHQTYRVQYIQDMVLPTPSVFEENMLSTLHSFIFFNKVEIVGMLQDDEKFLTELFAQLTDEATDDDKRHELVNFLKEFCAFSQTLQPQNRDAFFKTLSNMGILQALEVILGMDDVQVRGAATDIFSYLVEYNPSMVREFVMQESQQNDDDILLINLIIEHMICDTDPELGGAVQLMGLLRTLVDPENMLATANKTEKTEFLSFFYKHCMHVLSAPLLANTTEEKPSKDDFQTCQLLALIVELLTFCVEHHTYHIKNYIINKDILRRVLVLTASQHAFLALCALRFMRKIIGLKDEFYNRYIMRNFLFEPVVKAFLNNGSRYNLINSAIIEMFEYVRVEDVKSLTAHIIENYWKGLEDVDYVQTFKGLKLRYEQQRERQDNPKLDSMRSILRNHRFRRDARTLEDEEEMWFNTDEEDLEDGEAVVPPSDKMKNDEDLMDPISKFMERKKLKDSEEKEVLTGKASLSGRQSPSFKLSFSSSPKASLSSPPTASLHPGSPGSPSSPGTGARSSPPSAAVTTKGGLVGLVDYPDDDEEDEDEEDADSKEESPPLSKKSKLSS.

Residues 1 to 100 (MTDTRRRVKV…DEIWEKICQV (100 aa)) enclose the WH1 domain. Over residues 670 to 681 (FNTDEEDLEDGE) the composition is skewed to acidic residues. Positions 670–818 (FNTDEEDLED…PLSKKSKLSS (149 aa)) are disordered. Over residues 703–718 (FMERKKLKDSEEKEVL) the composition is skewed to basic and acidic residues. A compositionally biased stretch (low complexity) spans 729–775 (SPSFKLSFSSSPKASLSSPPTASLHPGSPGSPSSPGTGARSSPPSAA). A phosphoserine mark is found at S769 and S770. Over residues 788-803 (YPDDDEEDEDEEDADS) the composition is skewed to acidic residues.

This sequence belongs to the SMEK family. As to quaternary structure, serine/threonine-protein phosphatase 4 (PP4) occurs in different assemblies of the catalytic and one or more regulatory subunits.

Its function is as follows. Regulatory subunit of serine/threonine-protein phosphatase 4. This chain is Serine/threonine-protein phosphatase 4 regulatory subunit 3 (smek1), found in Danio rerio (Zebrafish).